A 233-amino-acid polypeptide reads, in one-letter code: DNA repair protein RecO (233 aa).

The protein belongs to the RecO family.

Its function is as follows. Involved in DNA repair and RecF pathway recombination. This Pseudomonas aeruginosa (strain LESB58) protein is DNA repair protein RecO.